Consider the following 53-residue polypeptide: uncharacterized protein (53 aa).

The chain crosses the membrane as a helical span at residues 26-46; sequence CYLLFCFLECFLNLFKKCGVF.

It belongs to the plectrovirus ORF11 family.

It localises to the host membrane. This is an uncharacterized protein from Spiroplasma virus SpV1-R8A2 B (SpV1).